The chain runs to 208 residues: Cytidylate kinase (208 aa).

7–15 (GPAASGKGT) serves as a coordination point for ATP.

The protein belongs to the cytidylate kinase family. Type 1 subfamily.

The protein resides in the cytoplasm. The enzyme catalyses CMP + ATP = CDP + ADP. It catalyses the reaction dCMP + ATP = dCDP + ADP. The sequence is that of Cytidylate kinase from Xanthobacter autotrophicus (strain ATCC BAA-1158 / Py2).